Consider the following 174-residue polypeptide: MRPVAPEKDGPRVNEEIRIREVQLIDQDGQNRGVVAIRDALTLAQEAGLDLVEISPNSAPPVCKILDYGRFKYQNQKKASEARKKQKVVEVKEIKLRPGIDTHDYEVKMRSMERFFEEGDKVKVTLRFRGREMAHQDIGFKLLQKLKEDVAAIAKVEAEPMLEGRQMIMILSPR.

It belongs to the IF-3 family. Monomer.

It localises to the cytoplasm. IF-3 binds to the 30S ribosomal subunit and shifts the equilibrium between 70S ribosomes and their 50S and 30S subunits in favor of the free subunits, thus enhancing the availability of 30S subunits on which protein synthesis initiation begins. This Xanthobacter autotrophicus (strain ATCC BAA-1158 / Py2) protein is Translation initiation factor IF-3.